The primary structure comprises 110 residues: Small ribosomal subunit protein bS18 (110 aa).

Residues 1–18 show a composition bias toward low complexity; the sequence is MSEATTTTTTTSAPRPGG. Positions 1–41 are disordered; the sequence is MSEATTTTTTTSAPRPGGRPSGPRPDRGPGGPRKKRPFQRR. The segment covering 32 to 41 has biased composition (basic residues); it reads PRKKRPFQRR.

This sequence belongs to the bacterial ribosomal protein bS18 family. As to quaternary structure, part of the 30S ribosomal subunit. Forms a tight heterodimer with protein bS6.

Its function is as follows. Binds as a heterodimer with protein bS6 to the central domain of the 16S rRNA, where it helps stabilize the platform of the 30S subunit. The chain is Small ribosomal subunit protein bS18 from Trichlorobacter lovleyi (strain ATCC BAA-1151 / DSM 17278 / SZ) (Geobacter lovleyi).